A 164-amino-acid chain; its full sequence is Kunitz-type serine protease inhibitor BbKI (164 aa).

This sequence belongs to the protease inhibitor I3 (leguminous Kunitz-type inhibitor) family. As to quaternary structure, monomer.

The protein localises to the secreted. Functionally, inhibits bovine trypsin, human plasma kallikrein and plasmin and weakly bovine chymotrypsin. This is Kunitz-type serine protease inhibitor BbKI from Bauhinia bauhinioides (Perlebia bauhinoides).